The following is a 1513-amino-acid chain: Protein tincar (1513 aa).

Residues Met1–Ser77 are Cytoplasmic-facing. The helical transmembrane segment at Leu78 to Gly98 threads the bilayer. At Ala99–Leu120 the chain is on the extracellular side. The helical transmembrane segment at Gln121–Phe141 threads the bilayer. At Lys142–Ala181 the chain is on the cytoplasmic side. The helical transmembrane segment at Leu182–Leu202 threads the bilayer. Residues Leu203–Ala668 lie on the Extracellular side of the membrane. Disordered regions lie at residues Thr247–Gly266, Glu354–Val373, and Met383–Arg532. Positions Ala427–Thr466 are enriched in low complexity. Over residues Ser478–Val507 the composition is skewed to basic residues. A compositionally biased stretch (basic and acidic residues) spans Thr523–Arg532. Residues Glu669–Trp689 traverse the membrane as a helical segment. Topologically, residues Asn690–Ala696 are cytoplasmic. Residues Cys697–Ile717 form a helical membrane-spanning segment. Over Ser718 to Gly736 the chain is Extracellular. A helical transmembrane segment spans residues Leu737–Ala757. The Cytoplasmic segment spans residues Ser758–Thr787. The helical transmembrane segment at Trp788–Ala808 threads the bilayer. Residues Pro809–Thr826 are Extracellular-facing. A helical transmembrane segment spans residues Phe827–Leu847. Residues Thr848 to His1513 lie on the Cytoplasmic side of the membrane. Low complexity-rich tracts occupy residues Ser879–Gly903 and Gln1060–Gln1071. Disordered regions lie at residues Ser879–Ala913, Glu1045–Gly1090, Ala1115–Gly1155, Glu1173–His1214, and Ala1231–Ala1335. The span at Pro1122–Val1149 shows a compositional bias: pro residues. Low complexity-rich tracts occupy residues Leu1179–Gln1208 and Thr1255–His1285. Residues Ser1286–Ile1296 are compositionally biased toward basic and acidic residues. A compositionally biased stretch (pro residues) spans Lys1303–Gln1314. Residues Met1324 to Ala1335 show a composition bias toward polar residues.

Expression varies in tissues throughout development. At stage 5, expressed in the embryo dorsal region followed by expression in a striped pattern at stage 6. During gastrulation, expressed in ventral region and ventral nerve cord. Also detected in many neurons in the externa sensilla and chordotonal organ. At stage 16, expressed on the surface of the midgut. Additionally, expressed in a subset of cardioblasts (Tin+ subpopulation) during dorsal vessel formation. In third-instar larval tissues, expressed in the eye and antennal disks. In the antennal disks, expressed in the second antennal segments. In the eye disks, strongest expression found in the ocelli, and in the differentiating ommatidial cells. Also expressed in all cells within and in the vicinity of the morphogenetic furrow.

Its subcellular location is the membrane. Its function is as follows. Involved in eye morphogenesis. May be essential for the normal differentiation of ommatidial cells. The sequence is that of Protein tincar (tinc) from Drosophila melanogaster (Fruit fly).